The following is a 156-amino-acid chain: Small ribosomal subunit protein uS7 (156 aa).

It belongs to the universal ribosomal protein uS7 family. In terms of assembly, part of the 30S ribosomal subunit. Contacts proteins S9 and S11.

In terms of biological role, one of the primary rRNA binding proteins, it binds directly to 16S rRNA where it nucleates assembly of the head domain of the 30S subunit. Is located at the subunit interface close to the decoding center, probably blocks exit of the E-site tRNA. The polypeptide is Small ribosomal subunit protein uS7 (Streptococcus pneumoniae serotype 4 (strain ATCC BAA-334 / TIGR4)).